The sequence spans 67 residues: Small ribosomal subunit protein eS27 (67 aa).

Residues C22, C25, C41, and C44 each coordinate Zn(2+). A C4-type zinc finger spans residues 22–44 (CPDCGNEQVTFSHAAMVVRCLVC).

Belongs to the eukaryotic ribosomal protein eS27 family. In terms of assembly, part of the 30S ribosomal subunit. The cofactor is Zn(2+).

The chain is Small ribosomal subunit protein eS27 from Pyrobaculum calidifontis (strain DSM 21063 / JCM 11548 / VA1).